The following is a 408-amino-acid chain: MKKAAIITIGSELLEGLILNKNAQFLCQELKNLGYRVVKVSTVGDDLISISEEVKTLLLKVDLLILTGGLGPTQDDLTRDAVAKVLNRSLKLNEELLSKIKEKIKKYHSEIPQNIERQALVIDGAEVLDNPVGSAPGQLLTVDGKIVILLPGPPRELIPMFNALKDRLRTPDALYQVVLKYYSIPEAVLEDLLKDILYSQNIVEVATMADHVEGVRLRLTTHMKNKEYLDEMVKKILDKTGEHLYGVNDEKMEEVVVRLLKDRKKTLAVAESCTGGMLSSLVVNVPGASEVFIGGVVAYSNDLKKHILGVREDTLKKHGAVSEECVQEMTEGLKKLTGADICVSISGIAGPSGGTPEKPVGTVFIDIFEHEHITMRYNFTGDRNMIRTRSAMMALENLRKYLKGRERV.

It belongs to the CinA family.

The chain is CinA-like protein from Thermotoga maritima (strain ATCC 43589 / DSM 3109 / JCM 10099 / NBRC 100826 / MSB8).